The primary structure comprises 1282 residues: Indigoidine synthase (1282 aa).

Residues 24–379 (AQRVAEHPEA…GGIQLARGYL (356 aa)) are adenylation. In terms of domain architecture, Carrier spans 937 to 1012 (APRTETEKEI…KLARRLEREV (76 aa)). At serine 972 the chain carries O-(pantetheine 4'-phosphoryl)serine. A thioesterase region spans residues 1030-1138 (RPVICWPGLG…APGSPKVRAE (109 aa)).

The protein belongs to the ATP-dependent AMP-binding enzyme family. Pantetheine 4'-phosphate serves as cofactor.

It catalyses the reaction 2 FMN + 2 L-glutamine + 2 ATP + O2 = indigoidine + 2 FMNH2 + 2 AMP + 2 diphosphate + 2 H2O. The enzyme catalyses FMN + L-glutamine + ATP = 3-amino-1,5-dihydropyridine-2,6-dione + FMNH2 + AMP + diphosphate. The catalysed reaction is 2 3-amino-1,5-dihydropyridine-2,6-dione + O2 = indigoidine + 2 H2O. Its pathway is pigment biosynthesis. Nonribosomal peptide synthetase involved in the biosynthesis of the blue pigment indigoidine. Catalyzes the synthesis of the blue pigment using L-Gln as a substrate. Two glutamine molecules are cyclized and oxidized to form indigoidine. The polypeptide is Indigoidine synthase (Streptomyces lavendulae).